A 208-amino-acid chain; its full sequence is UPF0637 protein BcerKBAB4_3786 (208 aa).

It belongs to the UPF0637 family.

The polypeptide is UPF0637 protein BcerKBAB4_3786 (Bacillus mycoides (strain KBAB4) (Bacillus weihenstephanensis)).